The chain runs to 648 residues: Protein associated with UVRAG as autophagy enhancer (648 aa).

Composition is skewed to polar residues over residues 131–146 (QESL…TSPS) and 157–173 (PHLT…SSSR). Residues 131–173 (QESLLKNPKTVATSPSPKEGSARSESPHLTASTDDGDARSSSR) form a disordered region. Serine 144 bears the Phosphoserine mark. Positions 183-222 (ETFMLPADVEKENLHFYAADIIISVIENMKCNLPNQQQPE) are interaction with UVRAG. Residues lysine 469, lysine 509, lysine 519, lysine 559, and lysine 619 each carry the N6-acetyllysine modification.

As to quaternary structure, interacts with UVRAG; the interaction is direct and promotes association with the PI3K/PI3KC3 and HOPS complexes. Interacts with STX17. In terms of processing, phosphorylated by MTOR at Ser-144 under nutrient-rich conditions. Phosphorylation prevents acetylation by KAT5/TIP60 and impairs RUBCNL/PACER function and autophagosome maturation. Under autophagy induction, Phosphorylation by MTOR is repressed, enabling acetylation by KAT5/TIP60. Post-translationally, acetylated by KAT5/TIP60 under autophagy induction, promoting autophagosome maturation and lipid metabolism. Acetylation is prevented by phosphorylation by MTOR. Lys-469 and Lys-559 constitute the key sites for tuning function in autophagy.

Its subcellular location is the cytoplasmic vesicle. It is found in the autophagosome membrane. Regulator of autophagy that promotes autophagosome maturation by facilitating the biogenesis of phosphatidylinositol 3-phosphate (PtdIns(3)P) in late steps of autophagy. Acts by antagonizing RUBCN, thereby stimulating phosphatidylinositol 3-kinase activity of the PI3K/PI3KC3 complex. Following anchorage to the autophagosomal SNARE STX17, promotes the recruitment of PI3K/PI3KC3 and HOPS complexes to the autophagosome to regulate the fusion specificity of autophagosomes with late endosomes/lysosomes. Binds phosphoinositides phosphatidylinositol 3-phosphate (PtdIns(3)P), 4-phosphate (PtdIns(4)P) and 5-phosphate (PtdIns(5)P). In addition to its role in autophagy, acts as a regulator of lipid and glycogen homeostasis. May act as a tumor suppressor. The sequence is that of Protein associated with UVRAG as autophagy enhancer from Mus musculus (Mouse).